The chain runs to 329 residues: Porphobilinogen deaminase (329 aa).

The residue at position 250 (cysteine 250) is an S-(dipyrrolylmethanemethyl)cysteine.

Belongs to the HMBS family. As to quaternary structure, monomer. Dipyrromethane serves as cofactor.

The catalysed reaction is 4 porphobilinogen + H2O = hydroxymethylbilane + 4 NH4(+). It functions in the pathway porphyrin-containing compound metabolism; protoporphyrin-IX biosynthesis; coproporphyrinogen-III from 5-aminolevulinate: step 2/4. Functionally, tetrapolymerization of the monopyrrole PBG into the hydroxymethylbilane pre-uroporphyrinogen in several discrete steps. The chain is Porphobilinogen deaminase from Burkholderia thailandensis (strain ATCC 700388 / DSM 13276 / CCUG 48851 / CIP 106301 / E264).